A 124-amino-acid chain; its full sequence is MSSPAPSTSHNAANSTQAFSLKTRRPIDEDDLLTAEDREAKSTVEKLDCATRRRACKNCTCGRAELERQLEAGGSQVMGAMPPGGCGNCAKGDAFRCAGCPYLGMPAFDNAVDGKVKLDLTDDI.

The segment covering 1–20 (MSSPAPSTSHNAANSTQAFS) has biased composition (polar residues). 2 disordered regions span residues 1–39 (MSSP…EDRE) and 40–124 (AKST…TDDI). [2Fe-2S] cluster is bound by residues Cys49, Cys56, Cys59, and Cys61. The fe-S binding site A stretch occupies residues 49–61 (CATRRRACKNCTC). Residues Cys86, Cys89, Cys97, and Cys100 each contribute to the [4Fe-4S] cluster site. 2 short sequence motifs (cx2C motif) span residues 86–89 (CGNC) and 97–100 (CAGC). Positions 86–100 (CGNCAKGDAFRCAGC) are fe-S binding site B.

It belongs to the anamorsin family. Monomer. Requires [2Fe-2S] cluster as cofactor. [4Fe-4S] cluster serves as cofactor.

Its subcellular location is the cytoplasm. The protein localises to the mitochondrion intermembrane space. Its function is as follows. Component of the cytosolic iron-sulfur (Fe-S) protein assembly (CIA) machinery. Required for the maturation of extramitochondrial Fe-S proteins. Part of an electron transfer chain functioning in an early step of cytosolic Fe-S biogenesis, facilitating the de novo assembly of a [4Fe-4S] cluster on the cytosolic Fe-S scaffold complex. Electrons are transferred from NADPH via a FAD- and FMN-containing diflavin oxidoreductase. Together with the diflavin oxidoreductase, also required for the assembly of the diferric tyrosyl radical cofactor of ribonucleotide reductase (RNR), probably by providing electrons for reduction during radical cofactor maturation in the catalytic small subunit. The polypeptide is Anamorsin homolog (Trypanosoma brucei brucei (strain 927/4 GUTat10.1)).